Here is a 227-residue protein sequence, read N- to C-terminus: ATP-dependent dethiobiotin synthetase BioD (227 aa).

Residue 13-18 (DIGKTY) coordinates ATP. Residue threonine 17 participates in Mg(2+) binding. The active site involves lysine 38. Residue serine 42 coordinates substrate. ATP-binding positions include aspartate 55, 116-119 (EGSG), and 179-180 (NN). Residues aspartate 55 and glutamate 116 each contribute to the Mg(2+) site.

The protein belongs to the dethiobiotin synthetase family. Homodimer. Mg(2+) serves as cofactor.

The protein resides in the cytoplasm. It carries out the reaction (7R,8S)-7,8-diammoniononanoate + CO2 + ATP = (4R,5S)-dethiobiotin + ADP + phosphate + 3 H(+). Its pathway is cofactor biosynthesis; biotin biosynthesis; biotin from 7,8-diaminononanoate: step 1/2. Its function is as follows. Catalyzes a mechanistically unusual reaction, the ATP-dependent insertion of CO2 between the N7 and N8 nitrogen atoms of 7,8-diaminopelargonic acid (DAPA, also called 7,8-diammoniononanoate) to form a ureido ring. This is ATP-dependent dethiobiotin synthetase BioD from Clostridium botulinum (strain Loch Maree / Type A3).